A 179-amino-acid polypeptide reads, in one-letter code: ATP synthase subunit delta (179 aa).

The protein belongs to the ATPase delta chain family. As to quaternary structure, F-type ATPases have 2 components, F(1) - the catalytic core - and F(0) - the membrane proton channel. F(1) has five subunits: alpha(3), beta(3), gamma(1), delta(1), epsilon(1). F(0) has three main subunits: a(1), b(2) and c(10-14). The alpha and beta chains form an alternating ring which encloses part of the gamma chain. F(1) is attached to F(0) by a central stalk formed by the gamma and epsilon chains, while a peripheral stalk is formed by the delta and b chains.

It is found in the cell membrane. F(1)F(0) ATP synthase produces ATP from ADP in the presence of a proton or sodium gradient. F-type ATPases consist of two structural domains, F(1) containing the extramembraneous catalytic core and F(0) containing the membrane proton channel, linked together by a central stalk and a peripheral stalk. During catalysis, ATP synthesis in the catalytic domain of F(1) is coupled via a rotary mechanism of the central stalk subunits to proton translocation. In terms of biological role, this protein is part of the stalk that links CF(0) to CF(1). It either transmits conformational changes from CF(0) to CF(1) or is implicated in proton conduction. The chain is ATP synthase subunit delta from Listeria monocytogenes serotype 4b (strain CLIP80459).